The sequence spans 365 residues: tRNA-specific 2-thiouridylase MnmA (365 aa).

ATP is bound by residues 14 to 21 (AMSGGVDS) and leucine 40. The active-site Nucleophile is cysteine 108. A disulfide bridge links cysteine 108 with cysteine 204. Position 132 (glycine 132) interacts with ATP. Positions 154–156 (KDQ) are interaction with tRNA. Cysteine 204 (cysteine persulfide intermediate) is an active-site residue.

Belongs to the MnmA/TRMU family.

Its subcellular location is the cytoplasm. The enzyme catalyses S-sulfanyl-L-cysteinyl-[protein] + uridine(34) in tRNA + AH2 + ATP = 2-thiouridine(34) in tRNA + L-cysteinyl-[protein] + A + AMP + diphosphate + H(+). In terms of biological role, catalyzes the 2-thiolation of uridine at the wobble position (U34) of tRNA, leading to the formation of s(2)U34. The polypeptide is tRNA-specific 2-thiouridylase MnmA (Rickettsia felis (strain ATCC VR-1525 / URRWXCal2) (Rickettsia azadi)).